Here is a 568-residue protein sequence, read N- to C-terminus: Light-independent protochlorophyllide reductase subunit B (568 aa).

Asp-36 contacts [4Fe-4S] cluster. Asp-293 (proton donor) is an active-site residue. Residue 437 to 438 participates in substrate binding; that stretch reads GM. The segment at 476–517 is disordered; that stretch reads ANGHPEAGVSVGAAEPSAAPSRSVVTEESNRATTPSSSTVHP. Over residues 498-515 the composition is skewed to polar residues; it reads SVVTEESNRATTPSSSTV.

This sequence belongs to the ChlB/BchB/BchZ family. Protochlorophyllide reductase is composed of three subunits; BchL, BchN and BchB. Forms a heterotetramer of two BchB and two BchN subunits. [4Fe-4S] cluster is required as a cofactor.

The catalysed reaction is chlorophyllide a + oxidized 2[4Fe-4S]-[ferredoxin] + 2 ADP + 2 phosphate = protochlorophyllide a + reduced 2[4Fe-4S]-[ferredoxin] + 2 ATP + 2 H2O. The protein operates within porphyrin-containing compound metabolism; bacteriochlorophyll biosynthesis (light-independent). In terms of biological role, component of the dark-operative protochlorophyllide reductase (DPOR) that uses Mg-ATP and reduced ferredoxin to reduce ring D of protochlorophyllide (Pchlide) to form chlorophyllide a (Chlide). This reaction is light-independent. The NB-protein (BchN-BchB) is the catalytic component of the complex. In Roseiflexus sp. (strain RS-1), this protein is Light-independent protochlorophyllide reductase subunit B.